A 505-amino-acid chain; its full sequence is Deoxyguanosinetriphosphate triphosphohydrolase (505 aa).

The HD domain maps to 66–273 (RLTHSMEVQQ…MEAADDISYC (208 aa)).

Belongs to the dGTPase family. Type 1 subfamily. Homotetramer. Requires Mg(2+) as cofactor.

It catalyses the reaction dGTP + H2O = 2'-deoxyguanosine + triphosphate + H(+). Inhibited by the action of reducing agents such as dithiothreitol and 2-mercaptoethanol. Functionally, dGTPase preferentially hydrolyzes dGTP over the other canonical NTPs. This is Deoxyguanosinetriphosphate triphosphohydrolase from Shigella boydii.